Here is a 158-residue protein sequence, read N- to C-terminus: Regulator of G-protein signaling 13 (158 aa).

The RGS domain maps to 34-150 (SLESLMATKY…LKSEMYQQLL (117 aa)).

Its function is as follows. Inhibits signal transduction by increasing the GTPase activity of G protein alpha subunits thereby driving them into their inactive GDP-bound form. Binds to both G(i)-alpha and G(q)-alpha. In Mus musculus (Mouse), this protein is Regulator of G-protein signaling 13 (Rgs13).